An 865-amino-acid polypeptide reads, in one-letter code: Alanine--tRNA ligase (865 aa).

Zn(2+)-binding residues include His-554, His-558, Cys-656, and His-660.

The protein belongs to the class-II aminoacyl-tRNA synthetase family. Zn(2+) is required as a cofactor.

It is found in the cytoplasm. It carries out the reaction tRNA(Ala) + L-alanine + ATP = L-alanyl-tRNA(Ala) + AMP + diphosphate. Functionally, catalyzes the attachment of alanine to tRNA(Ala) in a two-step reaction: alanine is first activated by ATP to form Ala-AMP and then transferred to the acceptor end of tRNA(Ala). Also edits incorrectly charged Ser-tRNA(Ala) and Gly-tRNA(Ala) via its editing domain. This chain is Alanine--tRNA ligase, found in Francisella tularensis subsp. tularensis (strain FSC 198).